The chain runs to 691 residues: Protein vreteno (691 aa).

The disordered stretch occupies residues 128 to 155 (QKEREITSDPVTSTEPMPTPGPAISATE). Tudor domains follow at residues 366–427 (KLQS…LAGL) and 573–630 (APPI…FIFP).

As to quaternary structure, interacts with aub and piwi. As to expression, gonad-specific.

Its subcellular location is the cytoplasm. The protein resides in the cytoplasmic ribonucleoprotein granule. In terms of biological role, gonad-specific protein essential for germline development to repress transposable elements and preventing their mobilization, which is essential for the germline integrity. Acts via the piRNA metabolic process in both germline and somatic gonadal tissues by mediating the repression of transposable elements during meiosis. Required for primary piRNA biogenesis in both germline and somatic gonadal tissues. This chain is Protein vreteno (vret), found in Drosophila melanogaster (Fruit fly).